The following is a 503-amino-acid chain: ATP synthase subunit alpha (503 aa).

170-177 (GDRQTGKT) serves as a coordination point for ATP.

The protein belongs to the ATPase alpha/beta chains family. F-type ATPases have 2 components, CF(1) - the catalytic core - and CF(0) - the membrane proton channel. CF(1) has five subunits: alpha(3), beta(3), gamma(1), delta(1), epsilon(1). CF(0) has three main subunits: a(1), b(2) and c(9-12). The alpha and beta chains form an alternating ring which encloses part of the gamma chain. CF(1) is attached to CF(0) by a central stalk formed by the gamma and epsilon chains, while a peripheral stalk is formed by the delta and b chains.

The protein localises to the cell inner membrane. The catalysed reaction is ATP + H2O + 4 H(+)(in) = ADP + phosphate + 5 H(+)(out). Produces ATP from ADP in the presence of a proton gradient across the membrane. The alpha chain is a regulatory subunit. The sequence is that of ATP synthase subunit alpha from Pseudothermotoga lettingae (strain ATCC BAA-301 / DSM 14385 / NBRC 107922 / TMO) (Thermotoga lettingae).